The chain runs to 3912 residues: MLREGQGTVAHAPPRPLPHADVLPVSQAQRRLWFLCQLDGASVAYNMPFVTALDGHLDARALQRALDEIIRRHESLRTTFRLQAEGPVQVIHPPAPLDLPLHDLRSLDEPARAAEIQRRIDRAAHQPFDIERGPLLRAQLLRQSETRHVLCLVIHHIVADGWSIGVFVREFEALYGAFSASRPSPLTEPPLQYADFSRWQEERFPPSAVERHLTYWKQKLSDVQPLQLPADHPRPAVESFRGDHTIFRLDRGLTRGLHELAQCEGVTLFITLLSAFNVLLGRYSGQDDLAIASGTANRKHAELEGLIGFFVNTVVIRTDLSGNPTFRTVLSRVLASVMEATEHEDLPFERVVEELKPERTASHNPLAQVALTLQSFASNRLTLPGLTTSPCDFRFRTSKLDLMLLVTEVDGELEVVVEYNTDLFEDATIARMSAHLRTVMAAMVADPGARIGDISLLTTEERHRLLVDWNDTALACPEAEGVHHAFEQNAARQPDAIAVVFDGDPISRITYGALNERANQLAHHLIQQGVGPDVVVGIHVERSITMIVALLAVLKAGGAYLPLDPTYPQQRLAFILADAGAQVILTQEKWFDDLPPHTARVLDLDAIAPQLDANATSNPPLRATADHLAYIIYTSGSTGNPKGVLIPRRDTWSVARALAETYALTPESRVLQFASLNFDGSVVEITMTLFSGAALHVAPQEKLLPGAPLNAFLQRHAITHVQLAPSLLARLPPEGLEHVRTIMVAGEASSVGTVRGWLPGRRILNGYGPTETTVGAAMIAFTEADDAYLAKLDALPIGRPFYNKRVYLLDARLQPVPVGVPGEIYVASPGLARGYINRPAATAEKFLPNPFSETPGERIYRTGDLARYLPDGNLVFLGRVDNQVKLRGLRIELEEIESALKSHPHVGDAAVIVHEAPADQATSERDGKRLVAYVVPRRGWEPEGAQSDHIASWQTLHEQLLDESQAPEDWSFNITGWKSSYTGEALPAAEMRLWVESTVERILAHGPKDVLEIGTGTGLLLARIAPRVRAYLATDFSLEAIRYLETCKARAPELSNVTLLQRMADDFTGFSAGQFDTIVLNSVVQYFPTLDYLSAVIEGALRVLKPGGTLFLGDIRNLALLDAFHASVQTAKASGTLSRDELRYRVQQGVMNENELVIDPRFFTALSRKFPQITHVEVTPKRGLHRNELTLFRYDVALQVGGTPKGAPTITWFDWREEGLTSDSLPPWLSDTLATSPDAGVGLRRVPNARLQPDLAILSWLATRAEASLDAWRARQHDVPEGCAPEALWALETTWPGRVHLSWAAGHPDGSFDLVVTPPQAERRAPWSPAVDLTDEQLSAYVNHPLQAKVVRETLGQELRRYLQDKLPAYMVPTVLIPLPALPLTSNGKLDRRALPAPDIERRSRASTYVAPRNAREETLVAIWSKVLGVDPIGVEDNFFELGGDSILSIQIVGQAKQAGFSLTSRQMFEHQTIAALAEVASASKSIQAEQGLVEGSIPLTPIQRWFFETHQETPDHFNQAILLKVSADVSASRLEQAFHHLFTHHDALRMRFSRTADGFEQVNLGPIEGVTVDVIDLAHLPAAEQTRALTEAATSLQQRLSITSGPLSRIALIHLGAEQPARLLWILHHLVVDGVSWRILLDDLVTVLRQLEAGQPARFPPKTTSFKEWSERLHATAQQEQANTASSRAERDAWRSVPVPALPLDHPQGTNRKASAAQVQVALSVADTHALLHDAPRAYGTQVNDLLLTALALAFNAWTGDATLALDLEGHGREEDLVGADLSRTVGWFTTMHPVALRLPGRELSLALRAVKEQLRAQPGRGIAYGLFRYASGEGSLASWPAPQVNFNYLGQLDAMTDTAPLLGFAPEEIGPSDGPTGDRTHLFQVNGMVKDGSLQFTWTYSRELHRPETVQKLAHDFAETARRLTQHCLAHESHPTPGDFPAVTLSQNQLDVVLDALGADRDNVAAIYPLTSLQEGLLFHSLSAVPAPVPALADEDDEEDDELDEEFDAEVDEEDEDEEEEEDDDGENVYVTQLVFRIQGPLDAEKFRTAWQETVQRHPLLRSRFVWEGCERPLQVVLRSADLRWEEDELEEDSWSSPLRVHARREQQAGMLLDEAPLFRLNLLRAEDTEHHLIWTSHHILLDGWSGPLILKDVFASYDAQLLGESRTAADPPPYEAYVAWLKRQDGTASERFWRENLRGFSAPTPLVVDNEEPTGKQKHLHHRCKLSAETSQALKALAESFRVTLSTVYQAAWALLLHRYSGMSDVLFGVTVSGREADVPGIEEMVGLFIRTVPLRLHVDESQTLGAWLKEVQARQIEQREHQYVSLVDIQRWSDVPGGTQLFDSMFVFENYPLDSALLEQSGLRLTVSTMASPTHYPLVIAVVPGRTVETLFDHDTSRLSKHTVERLAAHWVELLTGMARRPDARIHTLPHLTSAEREKLLVTWNARPYVDEQRKYRGEEEPFGEELAAESTFLDLFQHHVAQTPDALALVGPSLQSTDERPVSRTYRALSARVHLLARHLRGLGVGPEVTVGVCLDRSIELVIGMLAIFEAGGVYLPLDPSQPLERLAYLVSDARPEVVLTQQRWNDRLPEQATRRVALDTAWAEIEAQPEVSHQHRTAGDNLAYVLYTSGSTGTPKGVQVTVDNLSRLTPALITAFDVTPRSRVLQYSSLSFDGSISEVAMALGAGAALHLAPAHELVPGPPLQKLLATRAITHVTLLPAALRWLSPRGLPALDVLIVTGEACPASLVRTWASGRRFVNAYGPTEITVAATAMECPVTMFQETEQPPPIGCPLQSTEIYILDAHLRPVPVGVPGDLYIGGAKLTRGYIHRPALTAERYIPHPFSDRPGARLYVTGDIARYQLDGTIDFLGRRDNQVKVRGYRIELGEVEAALNDHPGVREAVVVAQKDGAGDNRLVAYWAAKSTPPTTTEALRDALSKRLAAYMIPSVFVRMDALPLNATGKIDRQGLPPVDDTMLDREQFVAPRTATEETLTAIWSSTLGVARVGIRDDFFKLGGHSLLALNITTQIQKRFGHVITVDSIFRAPTIAVLARVIDEALAPTGARRALSLVVPLRERGTKVPLFFAAGMGMHAHYLRPLAEHLGEDQPFYALQSPAQGGEITDMATLVDTLIGAIQQIQPSGPYHLGGHSAGARIAFAVALELQRRGAEVPLVSIVDMRPPGRGATSDESAEWTQIGGLIGYVTMIKQAIGEGVLFVTPEELRKLDEAAAWQRTLDAFIAARWMPKDADVEQLQHLCAMNQNVVRVVRDHVPTDTHQGKLLVFSAAFAMRNGRQVSTEGWQAFCANPVTTHEVPGDHMTMLREPDVRGLAIKLRREIDELALERTDEAPGLPTPPEFPVVWEHPEDARMLWVHDVTHCREQMTPLDFCLRQQAMVEGSNLANLAYGVPFTGEIRLINTYVYQKIIPTTASPTELAAAMKRAEASVAALLPDLGRWWTETLLPEIEAHLEALDPENNYDFVHRHTLVEALAEAHRRTARLWEIHFRLLQPVMLAISRFVDLCKDLSTDDDPIDPYALLVGFPNKTTEGNRALWSLSRLALETPEVASILTSNEASRVSWKLRSTRGGRAFVAQLDAYLATYGQRNDSTYLDAPTWEEDPTPVIRNLQAYMTQPERDLDAELNALSEQRTQRLDALRARLRHYPRAVVDEFEQALTAAQTATVLSEDHNYWIDYKITHRLRHLCLYLGEQLKDWELLGDCEEIFYLSMDDVSRAAVETKRGGPFSANQRFYHLACARKDEAKRFHGVQPPRFLGTPSPLPALHDALSLASARFTGVAPSPSNDEKEIVGLSGAKGKARGKARVARNLADVPTLEPGEILVAMAMLPAWTPLFATVAAIVTDSGGMLSHAAVVAREYGIPAVVGTQVGTQRIRDGQLVEVDGERGVVTLL.

Positions 1411 to 1485 (APRNAREETL…ALAEVASASK (75 aa)) constitute a Carrier 1 domain. An O-(pantetheine 4'-phosphoryl)serine modification is found at Ser1446. Residues 1995–2029 (ADEDDEEDDELDEEFDAEVDEEDEDEEEEEDDDGE) are compositionally biased toward acidic residues. The tract at residues 1995–2030 (ADEDDEEDDELDEEFDAEVDEEDEDEEEEEDDDGEN) is disordered. In terms of domain architecture, Carrier 2 spans 2989-3064 (APRTATEETL…VLARVIDEAL (76 aa)). Ser3024 is subject to O-(pantetheine 4'-phosphoryl)serine.

The protein belongs to the ATP-dependent AMP-binding enzyme family. It depends on pantetheine 4'-phosphate as a cofactor.

Functionally, involved in the synthesis of chondramides. Activates R-beta-tyrosine and probably phenylalanine. This Chondromyces crocatus protein is Chondramide synthase cmdD.